Reading from the N-terminus, the 155-residue chain is Transcriptional repressor NrdR (155 aa).

Residues 1 to 22 form a disordered region; the sequence is MRCPFCGHDETQVKDSRPSEDG. A zinc finger spans residues 3–34; sequence CPFCGHDETQVKDSRPSEDGAAIRRRRLCPQC. The segment covering 7 to 22 has biased composition (basic and acidic residues); sequence GHDETQVKDSRPSEDG. The region spanning 49-139 is the ATP-cone domain; sequence ITILKRSGRR…VYRDFRETQD (91 aa).

It belongs to the NrdR family. The cofactor is Zn(2+).

In terms of biological role, negatively regulates transcription of bacterial ribonucleotide reductase nrd genes and operons by binding to NrdR-boxes. This Phenylobacterium zucineum (strain HLK1) protein is Transcriptional repressor NrdR.